A 371-amino-acid polypeptide reads, in one-letter code: 4-hydroxy-3-methylbut-2-en-1-yl diphosphate synthase (flavodoxin) (371 aa).

4 residues coordinate [4Fe-4S] cluster: cysteine 270, cysteine 273, cysteine 305, and glutamate 312.

This sequence belongs to the IspG family. Requires [4Fe-4S] cluster as cofactor.

The enzyme catalyses (2E)-4-hydroxy-3-methylbut-2-enyl diphosphate + oxidized [flavodoxin] + H2O + 2 H(+) = 2-C-methyl-D-erythritol 2,4-cyclic diphosphate + reduced [flavodoxin]. It functions in the pathway isoprenoid biosynthesis; isopentenyl diphosphate biosynthesis via DXP pathway; isopentenyl diphosphate from 1-deoxy-D-xylulose 5-phosphate: step 5/6. Converts 2C-methyl-D-erythritol 2,4-cyclodiphosphate (ME-2,4cPP) into 1-hydroxy-2-methyl-2-(E)-butenyl 4-diphosphate. This is 4-hydroxy-3-methylbut-2-en-1-yl diphosphate synthase (flavodoxin) from Shewanella sp. (strain W3-18-1).